A 730-amino-acid chain; its full sequence is Protein groucho (730 aa).

Residues 144–411 are disordered; sequence QVPGGPPQPM…GKPAYSFHMN (268 aa). The segment covering 198–233 has biased composition (basic and acidic residues); it reads AEERLRNSVSPADREKYRTRSPLDIENDSKRRKDEK. 3 positions are modified to phosphoserine: Ser-205, Ser-207, and Ser-218. A CCN domain region spans residues 206–267; sequence VSPADREKYR…SPRPNGEHVS (62 aa). Positions 227–230 match the Nuclear localization signal motif; it reads KRRK. Residue Ser-242 is modified to Phosphoserine; by CK2. The segment covering 254 to 283 has biased composition (basic and acidic residues); sequence MESHSPRPNGEHVSMEVRDRESLNGERLEK. Ser-258 is modified (phosphoserine; by CDC2). The tract at residues 262–425 is binding to basic helix-loop-helix domain; the sequence is NGEHVSMEVR…LQPVPFPPDA (164 aa). The residue at position 267 (Ser-267) is a Phosphoserine. Low complexity-rich tracts occupy residues 296–308, 322–345, and 353–362; these read SRSGSSSSRSTPS, AKARTPTPNAAAPAPGVNPKQMMP, and YPGAPYQRPA. Thr-326 and Thr-328 each carry phosphothreonine. The segment covering 366-382 has biased composition (pro residues); it reads QRPPSDPAYGRPPPMPY. WD repeat units lie at residues 442–480, 488–527, 532–571, 574–613, 615–654, 656–695, and 697–730; these read SHGEVVCAVTISNPTKYVYTGGKGCVKVWDISQPGNKNP, QRDNYIRSVKLLPDGRTLIVGGEASNLSIWDLASPTPRIK, SAAPACYALAISPDSKVCFSCCSDGNIAVWDLHNEILVRQ, GHTDGASCIDISPDGSRLWTGGLDNTVRSWDLREGRQLQQ, DFSSQIFSLGYCPTGDWLAVGMENSHVEVLHASKPDKYQL, LHESCVLSLRFAACGKWFVSTGKDNLLNAWRTPYGASIFQ, and KETSSVLSCDISTDDKYIVTGSGDKKATVYEVIY.

This sequence belongs to the WD repeat Groucho/TLE family. As to quaternary structure, forms a complex with the hairy/Enhancer of split/deadpan family of basic helix-loop-helix proteins in order to repress transcription. Its activity in regulating transcription depends on other proteins as it lacks a DNA-binding motif. Interacts with hairy/hry (via WRPW motif). Ubiquitinated by XIAP/BIRC4. Ubiquitinated by hyd in response to Wnt signaling, leading to degradation by the proteasome.

It localises to the nucleus. Its function is as follows. Transcriptional corepressor that regulates transcription when recruited to specific target DNA by hairy-related bHLH proteins. Maternally required for neurogenesis; in the segregation of the neuroectoderm. Directly or indirectly interacts with Notch and Delta. This chain is Protein groucho (gro), found in Drosophila melanogaster (Fruit fly).